The primary structure comprises 189 residues: Large ribosomal subunit protein uL5c (189 aa).

The protein belongs to the universal ribosomal protein uL5 family. As to quaternary structure, part of the 50S ribosomal subunit; contacts the 5S rRNA.

It is found in the plastid. The protein resides in the chloroplast. In terms of biological role, binds 5S rRNA, forms part of the central protuberance of the 50S subunit. In Chara vulgaris (Common stonewort), this protein is Large ribosomal subunit protein uL5c (rpl5).